A 153-amino-acid polypeptide reads, in one-letter code: Salivary C-type lectin 1 (153 aa).

A signal peptide spans 1-19; sequence MIFSLYLIVAISLADLTAA. The C-type lectin domain occupies 26–151; that stretch reads KNRFCFPNVV…CSSTRRFVCE (126 aa). Intrachain disulfides connect C45–C150 and C122–C142.

Ca(2+) serves as cofactor. As to expression, expressed in female salivary gland. Not detected or low-level expression in female midgut and fat body.

The protein resides in the secreted. Salivary protein with carbohydrate-binding activity; exibits high affinity for D-mannose. Agglutinates host erythrocytes. Probably participates in mosquito innate immune responses to prevent microorganism multiplication in sugar and blood meals. Its function is as follows. (Microbial infection) Agglutinates Staphylococcus aureus in vitro. In terms of biological role, (Microbial infection) Agglutinates Candida albicans in vitro. Functionally, (Microbial infection) Does not agglutinate Escherichia coli in vitro. The sequence is that of Salivary C-type lectin 1 from Aedes albopictus (Asian tiger mosquito).